The primary structure comprises 47 residues: Delta-actitoxin-Aspp1a (47 aa).

3 disulfide bridges follow: Cys4–Cys44, Cys6–Cys34, and Cys27–Cys45.

Belongs to the sea anemone sodium channel inhibitory toxin family. Type I subfamily.

The protein localises to the secreted. It is found in the nematocyst. Functionally, binds specifically to voltage-gated sodium channels (Nav) (site 3), thereby delaying their inactivation during signal transduction. Has a heart stimulation effect on isolated rat atria that is higher than that of Hk7a, Hk8a and Hk16a. This Anthopleura sp. (strain 'Zhanjiang') (Sea anemone) protein is Delta-actitoxin-Aspp1a.